Here is a 365-residue protein sequence, read N- to C-terminus: Methylthioribose-1-phosphate isomerase (365 aa).

Substrate is bound by residues 53-55 (RGA), arginine 90, and glutamine 201. Aspartate 242 (proton donor) is an active-site residue. 252–253 (NK) contacts substrate.

It belongs to the eIF-2B alpha/beta/delta subunits family. MtnA subfamily.

The enzyme catalyses 5-(methylsulfanyl)-alpha-D-ribose 1-phosphate = 5-(methylsulfanyl)-D-ribulose 1-phosphate. The protein operates within amino-acid biosynthesis; L-methionine biosynthesis via salvage pathway; L-methionine from S-methyl-5-thio-alpha-D-ribose 1-phosphate: step 1/6. In terms of biological role, catalyzes the interconversion of methylthioribose-1-phosphate (MTR-1-P) into methylthioribulose-1-phosphate (MTRu-1-P). The polypeptide is Methylthioribose-1-phosphate isomerase (Methylorubrum populi (strain ATCC BAA-705 / NCIMB 13946 / BJ001) (Methylobacterium populi)).